The chain runs to 591 residues: V-type ATP synthase alpha chain (591 aa).

Residue 232 to 239 (GPFGAGKT) coordinates ATP.

This sequence belongs to the ATPase alpha/beta chains family.

It catalyses the reaction ATP + H2O + 4 H(+)(in) = ADP + phosphate + 5 H(+)(out). Produces ATP from ADP in the presence of a proton gradient across the membrane. The V-type alpha chain is a catalytic subunit. In Clostridium perfringens (strain ATCC 13124 / DSM 756 / JCM 1290 / NCIMB 6125 / NCTC 8237 / Type A), this protein is V-type ATP synthase alpha chain.